The following is a 239-amino-acid chain: MEILPAIDLKEGRCVRLYQGEFNKETVVNEHPVAQAMIFEKMGANRLHIVDLDGAVLGKSANLSTIEDICKAVRISVQAGGGIRSLSAVEMLLSIGVEKVILGTAALHNRSFLEEVIRLYGEKIIVGIDAKNGYVATRGWLDMSEISYIELAKQMEAVGVQTIIFTDISKDGTLMGPNFAQLQLLQEEVSLRIIASGGISSLQDVEQLQAMNMYGVIIGKALYEKTMDLQEVLRVTKSC.

The active-site Proton acceptor is Asp8. The active-site Proton donor is the Asp129.

This sequence belongs to the HisA/HisF family.

It localises to the cytoplasm. The enzyme catalyses 1-(5-phospho-beta-D-ribosyl)-5-[(5-phospho-beta-D-ribosylamino)methylideneamino]imidazole-4-carboxamide = 5-[(5-phospho-1-deoxy-D-ribulos-1-ylimino)methylamino]-1-(5-phospho-beta-D-ribosyl)imidazole-4-carboxamide. It functions in the pathway amino-acid biosynthesis; L-histidine biosynthesis; L-histidine from 5-phospho-alpha-D-ribose 1-diphosphate: step 4/9. The polypeptide is 1-(5-phosphoribosyl)-5-[(5-phosphoribosylamino)methylideneamino] imidazole-4-carboxamide isomerase (Bacillus cytotoxicus (strain DSM 22905 / CIP 110041 / 391-98 / NVH 391-98)).